The sequence spans 436 residues: GTPase Der (436 aa).

EngA-type G domains lie at 4 to 167 (PIVA…KEEE) and 176 to 351 (IRLS…ENHK). Residues 10–17 (GRPNVGKS), 57–61 (DTGGI), 119–122 (NKVD), 182–189 (GRPNVGKS), 229–233 (DTAGM), and 294–297 (NKWD) each bind GTP. Residues 352–436 (KRVQSSTLNE…PVHIIARKRN (85 aa)) enclose the KH-like domain.

This sequence belongs to the TRAFAC class TrmE-Era-EngA-EngB-Septin-like GTPase superfamily. EngA (Der) GTPase family. As to quaternary structure, associates with the 50S ribosomal subunit.

In terms of biological role, GTPase that plays an essential role in the late steps of ribosome biogenesis. The sequence is that of GTPase Der from Staphylococcus saprophyticus subsp. saprophyticus (strain ATCC 15305 / DSM 20229 / NCIMB 8711 / NCTC 7292 / S-41).